Here is a 221-residue protein sequence, read N- to C-terminus: Small ribosomal subunit protein uS5 (221 aa).

The interval 1–40 (MMAQRNSGAPDNAGGSNDGREGGRGRRDNRDDRRGGRDNA) is disordered. The segment covering 18–40 (DGREGGRGRRDNRDDRRGGRDNA) has biased composition (basic and acidic residues). The 64-residue stretch at 45-108 (YLERVVTINR…DEARKNFFRV (64 aa)) folds into the S5 DRBM domain.

This sequence belongs to the universal ribosomal protein uS5 family. In terms of assembly, part of the 30S ribosomal subunit. Contacts proteins S4 and S8.

With S4 and S12 plays an important role in translational accuracy. In terms of biological role, located at the back of the 30S subunit body where it stabilizes the conformation of the head with respect to the body. The protein is Small ribosomal subunit protein uS5 of Mycobacteroides abscessus (strain ATCC 19977 / DSM 44196 / CCUG 20993 / CIP 104536 / JCM 13569 / NCTC 13031 / TMC 1543 / L948) (Mycobacterium abscessus).